The primary structure comprises 347 residues: MRIEEDLKLGFKDVLIRPKRSTLKSRSEVELERQFTFKHSGLSWSGVPIIAANMDSVGTFSMAEALASFDVLTAVHKHYTLEQWAAFVQRVPASVLRHVMVSTGTSEADFVKMQQILALSPGLKFICIDVANGYSEHFVAFLQKAREACPNHVICAGNVVTGEMVEELILSGADIVKVGIGPGSVCTTRVKTGVGYPQLSAVIECADAAHGLGGQIVSDGGCSVPGDVAKAFGGGADFVMLGGMLAGHDECEGTVVEENGEKFMLFYGMSSESAMKRHVGGVAQYRAAEGKTVKLPLRGEVEFTVRDILGGLRSACTYVGAERLKELTKRTTFIRVAEQENRVFGSN.

Residue 108 to 131 (ADFVKMQQILALSPGLKFICIDVA) participates in NADP(+) binding. 2 residues coordinate K(+): G181 and G183. C186 functions as the Thioimidate intermediate in the catalytic mechanism. An NADP(+)-binding site is contributed by 216–239 (IVSDGGCSVPGDVAKAFGGGADFV).

It belongs to the IMPDH/GMPR family. GuaC type 1 subfamily. Homotetramer.

It catalyses the reaction IMP + NH4(+) + NADP(+) = GMP + NADPH + 2 H(+). Functionally, catalyzes the irreversible NADPH-dependent deamination of GMP to IMP. It functions in the conversion of nucleobase, nucleoside and nucleotide derivatives of G to A nucleotides, and in maintaining the intracellular balance of A and G nucleotides. The sequence is that of GMP reductase from Serratia proteamaculans (strain 568).